A 42-amino-acid polypeptide reads, in one-letter code: Photosystem I reaction center subunit IX (42 aa).

A helical transmembrane segment spans residues 7 to 27; sequence YLSAAPVLSTLWLGALAALLI.

The protein belongs to the PsaJ family.

It localises to the plastid membrane. Functionally, may help in the organization of the PsaE and PsaF subunits. The protein is Photosystem I reaction center subunit IX of Cuscuta reflexa (Southern Asian dodder).